The sequence spans 271 residues: Ferric enterobactin transport ATP-binding protein FepC (271 aa).

In terms of domain architecture, ABC transporter spans 8–244 (LRGEQLTLGY…ELIERIYGLR (237 aa)). 40–47 (GPNGCGKS) is a binding site for ATP.

It belongs to the ABC transporter superfamily. As to quaternary structure, the complex is composed of two ATP-binding proteins (FepC), two transmembrane proteins (FepD and FepG) and a solute-binding protein (FepB).

It is found in the cell inner membrane. It carries out the reaction Fe(III)-enterobactin(out) + ATP + H2O = Fe(III)-enterobactin(in) + ADP + phosphate + H(+). Its function is as follows. Part of the ABC transporter complex FepBDGC involved in ferric enterobactin uptake. Responsible for energy coupling to the transport system. The chain is Ferric enterobactin transport ATP-binding protein FepC (fepC) from Escherichia coli (strain K12).